The primary structure comprises 80 residues: Penaeidin-3 (80 aa).

Positions 1 to 19 are cleaved as a signal peptide; that stretch reads MRLVVCLVYLVSFALVCQG. Pyrrolidone carboxylic acid is present on glutamine 20. 3 disulfide bridges follow: cysteine 54-cysteine 67, cysteine 57-cysteine 74, and cysteine 68-cysteine 75.

Belongs to the penaeidin family. The N-terminus forms pyrrolidone carboxylic acid. In terms of tissue distribution, strongly expressed in hemocytes, and to a lesser extent in heart, muscle, gills, intestine and eyestalk. Lowest expression in hepatopancreas.

The protein resides in the cytoplasmic granule. In terms of biological role, antibacterial and antifungal activity. Presents chitin-binding activity. In Penaeus indicus (Indian white prawn), this protein is Penaeidin-3.